A 247-amino-acid chain; its full sequence is NAD(P)H-quinone oxidoreductase subunit K, chloroplastic (247 aa).

[4Fe-4S] cluster contacts are provided by Cys61, Cys62, Cys126, and Cys157.

This sequence belongs to the complex I 20 kDa subunit family. NDH is composed of at least 16 different subunits, 5 of which are encoded in the nucleus. [4Fe-4S] cluster serves as cofactor.

The protein localises to the plastid. Its subcellular location is the chloroplast thylakoid membrane. It catalyses the reaction a plastoquinone + NADH + (n+1) H(+)(in) = a plastoquinol + NAD(+) + n H(+)(out). It carries out the reaction a plastoquinone + NADPH + (n+1) H(+)(in) = a plastoquinol + NADP(+) + n H(+)(out). In terms of biological role, NDH shuttles electrons from NAD(P)H:plastoquinone, via FMN and iron-sulfur (Fe-S) centers, to quinones in the photosynthetic chain and possibly in a chloroplast respiratory chain. The immediate electron acceptor for the enzyme in this species is believed to be plastoquinone. Couples the redox reaction to proton translocation, and thus conserves the redox energy in a proton gradient. The protein is NAD(P)H-quinone oxidoreductase subunit K, chloroplastic of Anthoceros angustus (Hornwort).